We begin with the raw amino-acid sequence, 699 residues long: (E2-independent) E3 ubiquitin-conjugating enzyme FATS (699 aa).

Positions 48-116 are required for interaction with p53/TP53; it reads MISSIVISQM…LGIPAPSDER (69 aa). Disordered regions lie at residues 107-134, 443-473, and 528-569; these read LGIP…GGPR, KPTR…ERRH, and KSED…PARS. 2 stretches are compositionally biased toward basic and acidic residues: residues 113–129 and 460–473; these read SDER…EERP and CLSR…ERRH. Residues 116–224 form a required for interaction with HDAC1 region; that stretch reads RGPEAELPPK…GLCERRKYWV (109 aa). Residues 534-545 show a composition bias toward pro residues; that stretch reads TPEPSPAAPSPA. Residues 571 to 699 are ALMS motif; that stretch reads TLQEALEVRK…LDQLLQRNAV (129 aa).

As to quaternary structure, interacts with HDAC1; the interaction prevents binding of HDAC1 to CDKN1A/p21 and facilitates the acetylation and stabilization of CDKN1A/p21. Interacts with p53/TP53; the interaction inhibits binding of p53/TP53 and MDM2.

The protein localises to the cytoplasm. It is found in the cytoskeleton. Its subcellular location is the microtubule organizing center. It localises to the centrosome. Functionally, tumor suppressor that is required to sustain G2/M checkpoint after DNA damage. Acts as a p53/TP53 activator by inhibiting MDM2 binding to p53/TP53 and stimulating non-proteolytic polyubiquitination of p53/TP53. Exhibits ubiquitin ligase (E3) activity and assemble ubiquitin polymers through 'Lys-11'- (K11-), 'Lys-29'- (K29-) and 'Lys-63'- (K63)-linkages, independently of the ubiquitin-conjugating enzyme (E2). Promotes p53/TP53-dependent transcription of CDKN1A/p21, leading to robust checkpoint response. Mediates CDKN1A/p21 protein stability in a ubiquitin-independent manner. Interacts with HDAC1 and prevents binding of HDAC1 to CDKN1A/p21 and facilitates the acetylation and stabilization of CDKN1A/p21. May have a role in the assembly of primary cilia. This is (E2-independent) E3 ubiquitin-conjugating enzyme FATS from Homo sapiens (Human).